The primary structure comprises 300 residues: MENKHIPILLNEAIKSLNIKSDGIYLDLTVGMGGHSSEILKRLKNGLLVGFDKDLFAIEESRKRLSKIGSNFQLIHSDFNNVADELAKLNINAVDGILVDLGISSPQVDNAERGFSYSKDARLDMRMNTNQALDAHFVVNTYSEDELITIFYNYAEVKLAKQVANAIIKNRPINTTLELAEVIKSAYPAKLLSLKNPCKAVFQAIRIEVNNEFSSINSMLVQALNLLKKDSSLAIITFHSLEDSIIKKFFGNLIKSKHPSKMPIKEEKKYIVKVYSPSKAEISENNRSRSAKLRVLTKLI.

Residues Gly-33–His-35, Asp-52, Phe-79, Asp-100, and Gln-107 each bind S-adenosyl-L-methionine.

Belongs to the methyltransferase superfamily. RsmH family.

It is found in the cytoplasm. It carries out the reaction cytidine(1402) in 16S rRNA + S-adenosyl-L-methionine = N(4)-methylcytidine(1402) in 16S rRNA + S-adenosyl-L-homocysteine + H(+). Specifically methylates the N4 position of cytidine in position 1402 (C1402) of 16S rRNA. The chain is Ribosomal RNA small subunit methyltransferase H from Mycoplasmopsis agalactiae (strain NCTC 10123 / CIP 59.7 / PG2) (Mycoplasma agalactiae).